Reading from the N-terminus, the 142-residue chain is Transcriptional regulator MraZ (142 aa).

SpoVT-AbrB domains lie at 5 to 47 (NYQH…TNQE) and 76 to 119 (SLTV…DINA).

Belongs to the MraZ family. As to quaternary structure, forms oligomers.

It localises to the cytoplasm. The protein localises to the nucleoid. This is Transcriptional regulator MraZ from Mycoplasmoides gallisepticum (strain R(low / passage 15 / clone 2)) (Mycoplasma gallisepticum).